The primary structure comprises 320 residues: Putative movement protein (320 aa).

Catalysis depends on residues His-144, Asp-171, and Ser-199. The segment at 251 to 320 (RRSRSISAKR…GKGNSDGSSP (70 aa)) is disordered. Basic and acidic residues predominate over residues 278-289 (RIERFGKDEFGR).

This sequence belongs to the tobamoviruses movement protein family.

Its function is as follows. May play a role in viral cell to cell movement by increasing the size exclusion limit of plasmodesmata and forming a complex with viral RNA to assist its movement. May also have a papain-like protease activity and cleave the genome polyprotein. The sequence is that of Putative movement protein from Malus sylvestris (European crab apple).